The chain runs to 162 residues: Endoribonuclease YbeY (162 aa).

Histidine 128, histidine 132, and histidine 138 together coordinate Zn(2+).

This sequence belongs to the endoribonuclease YbeY family. It depends on Zn(2+) as a cofactor.

It localises to the cytoplasm. Functionally, single strand-specific metallo-endoribonuclease involved in late-stage 70S ribosome quality control and in maturation of the 3' terminus of the 16S rRNA. This Lactococcus lactis subsp. cremoris (strain MG1363) protein is Endoribonuclease YbeY.